Consider the following 506-residue polypeptide: Putative amidase (506 aa).

Catalysis depends on charge relay system residues K121 and S196. Residue S220 is the Acyl-ester intermediate of the active site.

The protein belongs to the amidase family.

The catalysed reaction is a monocarboxylic acid amide + H2O = a monocarboxylate + NH4(+). The protein is Putative amidase of Synechocystis sp. (strain ATCC 27184 / PCC 6803 / Kazusa).